We begin with the raw amino-acid sequence, 170 residues long: Peptide deformylase (170 aa).

2 residues coordinate Fe cation: C94 and H136. E137 is a catalytic residue. Residue H140 participates in Fe cation binding.

The protein belongs to the polypeptide deformylase family. Fe(2+) is required as a cofactor.

It catalyses the reaction N-terminal N-formyl-L-methionyl-[peptide] + H2O = N-terminal L-methionyl-[peptide] + formate. Removes the formyl group from the N-terminal Met of newly synthesized proteins. Requires at least a dipeptide for an efficient rate of reaction. N-terminal L-methionine is a prerequisite for activity but the enzyme has broad specificity at other positions. This Xylella fastidiosa (strain M12) protein is Peptide deformylase.